The following is a 411-amino-acid chain: MAKLLAMILAGGEGRRLDPLTRERAKPAVPFGGRYRIVDFVLSNFANSGVLKMKVLVQYKSESLNAHIQRGWRLTALLDQYVEIVPAQMRVGPKWFEGSADAIYQNLNIITDEEPEFTFIFGADHVYRMDVRQMLQFHQDKGADLTVAAIPVPVEEASEFGIIEVDGDGRMIGFVEKPKAGVKTMPGDPTRALASMGNYLFTTDALVQEIVRDAGDTKSAHDFGKSIVAAMYERKRVFVYDFAKNVVPGQGDKERGYWRDVGSLDAYYQANMDLVDVDPSFSLYNDRWPIFTAQHNFPPVKFVFNNQTEGRVGYATDSLVSEGCIISGGHAHHCILSPKVRINSYSLVEDSILFENVNIGRHCKIRRAIVDKHVEIPANTTIGYDLEHDRKRFHVTESGIVVIPKAMRVEP.

Residues Gly-161, 176–177 (EK), and Ser-195 contribute to the alpha-D-glucose 1-phosphate site.

The protein belongs to the bacterial/plant glucose-1-phosphate adenylyltransferase family. In terms of assembly, homotetramer.

It catalyses the reaction alpha-D-glucose 1-phosphate + ATP + H(+) = ADP-alpha-D-glucose + diphosphate. The protein operates within glycan biosynthesis; glycogen biosynthesis. Its function is as follows. Involved in the biosynthesis of ADP-glucose, a building block required for the elongation reactions to produce glycogen. Catalyzes the reaction between ATP and alpha-D-glucose 1-phosphate (G1P) to produce pyrophosphate and ADP-Glc. This Anaeromyxobacter sp. (strain Fw109-5) protein is Glucose-1-phosphate adenylyltransferase.